The chain runs to 368 residues: tRNA-specific 2-thiouridylase MnmA (368 aa).

ATP contacts are provided by residues 11-18 (GMSGGVDS) and Met37. Positions 97–99 (NPD) are interaction with target base in tRNA. The Nucleophile role is filled by Cys102. Residues Cys102 and Cys199 are joined by a disulfide bond. Residue Gly127 participates in ATP binding. The segment at 149–151 (KDQ) is interaction with tRNA. Catalysis depends on Cys199, which acts as the Cysteine persulfide intermediate. The tract at residues 311–312 (RY) is interaction with tRNA.

The protein belongs to the MnmA/TRMU family. Interacts with TusE.

Its subcellular location is the cytoplasm. The enzyme catalyses S-sulfanyl-L-cysteinyl-[protein] + uridine(34) in tRNA + AH2 + ATP = 2-thiouridine(34) in tRNA + L-cysteinyl-[protein] + A + AMP + diphosphate + H(+). In terms of biological role, catalyzes the 2-thiolation of uridine at the wobble position (U34) of tRNA(Lys), tRNA(Glu) and tRNA(Gln), leading to the formation of s(2)U34, the first step of tRNA-mnm(5)s(2)U34 synthesis. Sulfur is provided by IscS, via a sulfur-relay system. Binds ATP and its substrate tRNAs. The protein is tRNA-specific 2-thiouridylase MnmA of Escherichia coli O157:H7.